A 249-amino-acid chain; its full sequence is MKLNISFPATGCQKLIEVDDERKLRTFYEKRMATEVAADALGEEWKGYVVRISGGNDKQGFPMKQGVLTHGRVRLLLSKGHSCYRPRRTGERKRKSVRGCIVDANLSVLNLVIVKKGEKDIPGLTDTTVPRRLGPKRASRIRKLFNLSKEDDVRQYVVRKPLNKDGKKPRTKAPKIQRLVTPRVLQHKRRRIALKKQRTKKNKEEAAEYAKLLAKRMKEAKEKRQEQIAKRRRLSSLRASTSKSESSQK.

Lys-14 is covalently cross-linked (Glycyl lysine isopeptide (Lys-Gly) (interchain with G-Cter in SUMO2)). Glu-35 bears the ADP-ribosyl glutamic acid mark. The residue at position 137 (Arg-137) is a (3R)-3-hydroxyarginine. Phosphoserine is present on Ser-148. Position 211 is an N6-acetyllysine (Lys-211). Basic and acidic residues predominate over residues 217-229 (MKEAKEKRQEQIA). The interval 217 to 249 (MKEAKEKRQEQIAKRRRLSSLRASTSKSESSQK) is disordered. Ser-235 and Ser-236 each carry phosphoserine; by RPS6KA1, RPS6KA3, DAPK1 and PASK. Over residues 236–249 (SLRASTSKSESSQK) the composition is skewed to low complexity. A phosphoserine mark is found at Ser-240, Ser-242, Ser-244, and Ser-247.

The protein belongs to the eukaryotic ribosomal protein eS6 family. In terms of assembly, component of the small ribosomal subunit. Part of the small subunit (SSU) processome, composed of more than 70 proteins and the RNA chaperone small nucleolar RNA (snoRNA) U3. Post-translationally, ribosomal protein S6 is the major substrate of protein kinases in eukaryote ribosomes. The phosphorylation is stimulated by growth factors, tumor promoting agents, and mitogens. It is dephosphorylated at growth arrest. Phosphorylated at Ser-235 and Ser-236 by RPS6KA1 and RPS6KA3; phosphorylation at these sites facilitates the assembly of the pre-initiation complex. Specifically hydroxylated (with R stereochemistry) at C-3 of Arg-137 by KDM8. In terms of processing, mono-ADP-ribosylation at Glu-35 by PARP16 inhibits polysome assembly and mRNA loading, thereby inhibiting protein translation.

Its subcellular location is the cytoplasm. It localises to the nucleus. It is found in the nucleolus. Component of the 40S small ribosomal subunit. Plays an important role in controlling cell growth and proliferation through the selective translation of particular classes of mRNA. Part of the small subunit (SSU) processome, first precursor of the small eukaryotic ribosomal subunit. During the assembly of the SSU processome in the nucleolus, many ribosome biogenesis factors, an RNA chaperone and ribosomal proteins associate with the nascent pre-rRNA and work in concert to generate RNA folding, modifications, rearrangements and cleavage as well as targeted degradation of pre-ribosomal RNA by the RNA exosome. This Bos taurus (Bovine) protein is Small ribosomal subunit protein eS6 (RPS6).